A 168-amino-acid chain; its full sequence is Protein-export protein SecB (168 aa).

The segment at 1 to 20 (MTDETAANGENEAGRQSQSS) is disordered.

It belongs to the SecB family. As to quaternary structure, homotetramer, a dimer of dimers. One homotetramer interacts with 1 SecA dimer.

It localises to the cytoplasm. Its function is as follows. One of the proteins required for the normal export of preproteins out of the cell cytoplasm. It is a molecular chaperone that binds to a subset of precursor proteins, maintaining them in a translocation-competent state. It also specifically binds to its receptor SecA. This is Protein-export protein SecB from Rhodospirillum centenum (strain ATCC 51521 / SW).